An 840-amino-acid polypeptide reads, in one-letter code: Heat shock 70 kDa protein 4 (840 aa).

Residue K53 is modified to N6-acetyllysine. S76 carries the post-translational modification Phosphoserine. Y89 and Y336 each carry phosphotyrosine. Phosphoserine is present on residues S393 and S415. K430 is subject to N6-acetyllysine. Residues N506–S575 form a disordered region. Residues Q514 to E533 are compositionally biased toward basic and acidic residues. Phosphothreonine is present on T538. S546 and S647 each carry phosphoserine. A Phosphotyrosine modification is found at Y660. Residue K679 is modified to N6-acetyllysine. S756 is subject to Phosphoserine. K773 is subject to N6-methyllysine. Residues I782–D840 are disordered. Basic and acidic residues-rich tracts occupy residues P788–N799 and D829–D840.

This sequence belongs to the heat shock protein 70 family. Interacts with TJP1/ZO-1.

It is found in the cytoplasm. The protein is Heat shock 70 kDa protein 4 (HSPA4) of Canis lupus familiaris (Dog).